The following is a 1273-amino-acid chain: Protein sax-3 (1273 aa).

A signal peptide spans Met1 to Cys23. Ig-like C2-type domains follow at residues Pro31–Lys127, Glu133–Ser222, Pro227–Arg312, Pro317–Thr411, and Pro425–Thr511. Disulfide bonds link Cys52/Cys110, Cys154/Cys205, Cys248/Cys296, Cys338/Cys393, and Cys446/Cys495. Fibronectin type-III domains lie at Ser533–Pro628, Gln653–Ala750, and Pro755–Asp849. A helical transmembrane segment spans residues Val874–Cys894. Positions Ala1033–Thr1273 are disordered. Pro residues predominate over residues Pro1037–Pro1046. Residues Gln1096–Ser1105 show a composition bias toward polar residues. Positions Ser1106–Thr1115 are enriched in basic and acidic residues. The segment covering Ile1125 to Gly1136 has biased composition (pro residues). Residues Gln1145–Ser1156 are compositionally biased toward polar residues. The segment covering Met1207–Glu1222 has biased composition (acidic residues). Residues Ser1240–Thr1273 show a composition bias toward polar residues.

This sequence belongs to the immunoglobulin superfamily. ROBO/SAX3 family. In terms of tissue distribution, expressed in the AVG interneuron and the male-specific sensory neuron HOA.

Its subcellular location is the membrane. In terms of biological role, required to confine migrating sex myoblasts to the ventral muscle quadrants during their migration through the body and for multiple aspects of sensory, motor, and interneuron axon guidance. This Caenorhabditis elegans protein is Protein sax-3.